The following is a 37-amino-acid chain: MWYFAWILGTLLACSFGVITALALEHVESGKAGQEDI.

The chain crosses the membrane as a helical span at residues 4 to 24; it reads FAWILGTLLACSFGVITALAL.

It belongs to the cytochrome ubiquinol oxidase subunit X family. In terms of assembly, may be a subunit of cytochrome bd-I ubiquinol oxidase. Probably interacts with CydA and CydB.

The protein resides in the cell inner membrane. It carries out the reaction 2 a ubiquinol + O2(in) + 4 H(+)(in) = 2 a ubiquinone + 2 H2O(in) + 4 H(+)(out). Its pathway is energy metabolism; oxidative phosphorylation. Its function is as follows. Required for correct functioning of cytochrome bd-I oxidase. This protein and AppX may have some functional overlap. The sequence is that of Cytochrome bd-I ubiquinol oxidase subunit X (cydX) from Escherichia coli (strain K12).